An 82-amino-acid chain; its full sequence is Small ribosomal subunit protein bTHXm (82 aa).

Residues 1 to 22 (MAMRLAAAAAFVRRLVPARNPV) constitute a mitochondrion transit peptide. Residues 34–56 (RGDKKTKRGKRFKGSYGNARPKR) are disordered. Residues 37–46 (KKTKRGKRFK) are compositionally biased toward basic residues.

It belongs to the bacterial ribosomal protein bTHX family.

The protein resides in the mitochondrion. The polypeptide is Small ribosomal subunit protein bTHXm (Oryza sativa subsp. japonica (Rice)).